Consider the following 381-residue polypeptide: Queuine tRNA-ribosyltransferase (381 aa).

Asp-103 functions as the Proton acceptor in the catalytic mechanism. Substrate is bound by residues 103 to 107 (DSGGF), Asp-157, Gln-200, and Gly-227. Residues 258–264 (GVGTYRE) form an RNA binding region. Catalysis depends on Asp-277, which acts as the Nucleophile. The segment at 282-286 (TRLAR) is RNA binding; important for wobble base 34 recognition. Residues Cys-315, Cys-317, Cys-320, and His-346 each coordinate Zn(2+).

The protein belongs to the queuine tRNA-ribosyltransferase family. As to quaternary structure, homodimer. Within each dimer, one monomer is responsible for RNA recognition and catalysis, while the other monomer binds to the replacement base PreQ1. It depends on Zn(2+) as a cofactor.

It catalyses the reaction 7-aminomethyl-7-carbaguanine + guanosine(34) in tRNA = 7-aminomethyl-7-carbaguanosine(34) in tRNA + guanine. It participates in tRNA modification; tRNA-queuosine biosynthesis. Catalyzes the base-exchange of a guanine (G) residue with the queuine precursor 7-aminomethyl-7-deazaguanine (PreQ1) at position 34 (anticodon wobble position) in tRNAs with GU(N) anticodons (tRNA-Asp, -Asn, -His and -Tyr). Catalysis occurs through a double-displacement mechanism. The nucleophile active site attacks the C1' of nucleotide 34 to detach the guanine base from the RNA, forming a covalent enzyme-RNA intermediate. The proton acceptor active site deprotonates the incoming PreQ1, allowing a nucleophilic attack on the C1' of the ribose to form the product. After dissociation, two additional enzymatic reactions on the tRNA convert PreQ1 to queuine (Q), resulting in the hypermodified nucleoside queuosine (7-(((4,5-cis-dihydroxy-2-cyclopenten-1-yl)amino)methyl)-7-deazaguanosine). In Cyanothece sp. (strain PCC 7425 / ATCC 29141), this protein is Queuine tRNA-ribosyltransferase.